We begin with the raw amino-acid sequence, 235 residues long: MRTQVYEGLCKNYFSLAVLQRDRIKLLFFDILVFLSVFLLFLLFLVDIMANNTTSLGSPWPENFWEDLIMSFTVSMAIGLVLGGFIWAVFICLSRRRRASAPISQWSSSRRSRSSYTHGLNRTGFYRHSGCERRSNLSLASLTFQRQASLEQANSFPRKSSFRASTFHPFLQCPPLPVETESQLVTLPSSNISPTISTSHSLSRPDYWSSNSLRVGLSTPPPPAYESIIKAFPDS.

The Bipartite nuclear localization signal motif lies at 95 to 113 (RRRRASAPISQWSSSRRSR). A phosphoserine mark is found at Ser-135, Ser-138, Ser-141, and Ser-149.

This sequence belongs to the MYCT1 family. As to expression, down-regulated in gastric cancer tissues.

Its subcellular location is the nucleus. In terms of biological role, may regulate certain MYC target genes, MYC seems to be a direct upstream transcriptional activator. Does not seem to significantly affect growth cell capacity. Overexpression seems to mediate many of the known phenotypic features associated with MYC, including promotion of apoptosis, alteration of morphology, enhancement of anchorage-independent growth, tumorigenic conversion, promotion of genomic instability, and inhibition of hematopoietic differentiation. This is Myc target protein 1 (MYCT1) from Homo sapiens (Human).